A 386-amino-acid chain; its full sequence is Latent membrane protein 1 (386 aa).

Over 1–23 (MEHDLERGPPGPRRPPRGPPLSS) the chain is Cytoplasmic. A helical membrane pass occupies residues 24 to 44 (SLGLALLLLLLALLFWLYIVM). The Extracellular portion of the chain corresponds to 45–51 (SDWTGGA). The chain crosses the membrane as a helical span at residues 52-72 (LLVLYSFALMLIIIILIIFIF). Residues 73–75 (RRD) lie on the Cytoplasmic side of the membrane. A helical membrane pass occupies residues 76–96 (LLCPLGALCILLLMITLLLIA). The Extracellular portion of the chain corresponds to 97-106 (LWNLHGQALF). The chain crosses the membrane as a helical span at residues 107 to 127 (LGIVLFIFGCLLVLGIWIYLL). At 128–139 (EMLWRLGATIWQ) the chain is on the cytoplasmic side. A helical membrane pass occupies residues 140–160 (LLAFFLAFFLDLILLIIALYL). Topologically, residues 161–163 (QQN) are extracellular. Residues 164 to 184 (WWTLLVDLLWLLLFLAILIWM) traverse the membrane as a helical segment. Residues 185-386 (YYHGQRHSDE…HGPVQLSYYD (202 aa)) are Cytoplasmic-facing. The interval 194 to 232 (EHHHDDSLPHPQQATDDSGHESDSNSNEGRHHLLVSGAG) is CTAR1. The disordered stretch occupies residues 194–386 (EHHHDDSLPH…HGPVQLSYYD (193 aa)). The short motif at 204 to 208 (PQQAT) is the Interaction with host TRAF proteins element. Basic and acidic residues predominate over residues 210-224 (DSGHESDSNSNEGRH). The segment covering 251-267 (NGPQDPDNTDDNGPQDP) has biased composition (low complexity). Residues 351 to 386 (GHGGGDPHLPTLLLGSSGSGGDDDDPHGPVQLSYYD) are CTAR2.

The protein belongs to the herpesviridae LMP-1 family. Interacts (via PXQXT motif) with host tumor necrosis factor receptor-associated factor (TRAF) proteins TRAF1, TRAF2, TRAF3 and TRAF5. Interacts with human protein ZMYND11; leading to negatively regulate NF-kappa-B activation. Interacts with host UBE2I; this interaction induces the sumoylation of various cellular proteins. Interacts with host IRF7. Interacts with host TYK2. In terms of processing, ubiquitinated on the N-terminus.

Its subcellular location is the host cell membrane. Acts as a CD40 functional homolog to prevent apoptosis of infected B-lymphocytes and drive their proliferation. Functions as a constitutively active tumor necrosis factor receptor that induces the activation of several signaling pathways, including those of the NF-kappa-B family. LMP1 signaling leads to up-regulation of antiapoptotic proteins and provide growth signals in latently infected cells. Interacts with host UBE2I and subsequently affects the sumoylation state of several cellular proteins. For example, induces the sumoylation of host IRF7 thereby limiting its transcriptional activity and modulating the activation of innate immune responses. Also inhibits host IFN-alpha-stimulated STAT2 nuclear translocation and interferon-stimulated response element transcriptional activity by interacting with and inhibiting host TYK2. Induces SUMO expression during viral latency thereby dysregulating the host sumoylation processes. In Epstein-Barr virus (strain B95-8) (HHV-4), this protein is Latent membrane protein 1 (LMP1).